A 63-amino-acid polypeptide reads, in one-letter code: Serine protease inhibitor 3 (63 aa).

A signal peptide spans 1-23 (MAKLLAVFLVLLIAALVCEQALA). 3 cysteine pairs are disulfide-bonded: Cys24-Cys39, Cys34-Cys52, and Cys37-Cys47. Residues 24-55 (CTPGSRKYDGCNWCTCSSGGAWICTLKYCPPS) form the Pacifastin domain.

The protein belongs to the protease inhibitor I19 family. As to expression, expressed in hemolymph, ovaries, testes and fat body of adults but are absent in the gut. Also present in larval hemolymph and fat body.

The protein resides in the secreted. In terms of biological role, in vitro, active against alpha-chymotrypsin. This chain is Serine protease inhibitor 3, found in Schistocerca gregaria (Desert locust).